The primary structure comprises 248 residues: 3-deoxy-manno-octulosonate cytidylyltransferase (248 aa).

Belongs to the KdsB family.

The protein resides in the cytoplasm. The catalysed reaction is 3-deoxy-alpha-D-manno-oct-2-ulosonate + CTP = CMP-3-deoxy-beta-D-manno-octulosonate + diphosphate. Its pathway is nucleotide-sugar biosynthesis; CMP-3-deoxy-D-manno-octulosonate biosynthesis; CMP-3-deoxy-D-manno-octulosonate from 3-deoxy-D-manno-octulosonate and CTP: step 1/1. The protein operates within bacterial outer membrane biogenesis; lipopolysaccharide biosynthesis. In terms of biological role, activates KDO (a required 8-carbon sugar) for incorporation into bacterial lipopolysaccharide in Gram-negative bacteria. The protein is 3-deoxy-manno-octulosonate cytidylyltransferase of Cronobacter sakazakii (strain ATCC BAA-894) (Enterobacter sakazakii).